Consider the following 450-residue polypeptide: ATP-dependent RNA helicase FAL1 (450 aa).

The Q motif motif lies at 25–53; it reads PTFEDMHLKENLLRGIYAYGYESPSAVQS. Positions 56–226 constitute a Helicase ATP-binding domain; that stretch reads IVQICKGRDT…TKFMTDPVRI (171 aa). 69 to 76 serves as a coordination point for ATP; sequence AQSGTGKT. Positions 174-177 match the DEAD box motif; it reads DEAD. Residues 237-398 enclose the Helicase C-terminal domain; the sequence is GLKQYFIAVE…EMPMNGTLFY (162 aa).

The protein belongs to the DEAD box helicase family. DDX48/FAL1 subfamily.

Its subcellular location is the nucleus. The protein resides in the nucleolus. The enzyme catalyses ATP + H2O = ADP + phosphate + H(+). In terms of biological role, ATP-dependent RNA helicase involved in 40S ribosomal subunit biogenesis. Required for the processing and cleavage of 35S pre-rRNA at sites A0, A1, and A2, leading to mature 18S rRNA. This Ajellomyces capsulatus (strain NAm1 / WU24) (Darling's disease fungus) protein is ATP-dependent RNA helicase FAL1 (FAL1).